The chain runs to 255 residues: Hydroxyacylglutathione hydrolase (255 aa).

Zn(2+) contacts are provided by H56, H58, D60, H61, H114, D133, and H171.

This sequence belongs to the metallo-beta-lactamase superfamily. Glyoxalase II family. In terms of assembly, monomer. The cofactor is Zn(2+).

The enzyme catalyses an S-(2-hydroxyacyl)glutathione + H2O = a 2-hydroxy carboxylate + glutathione + H(+). It functions in the pathway secondary metabolite metabolism; methylglyoxal degradation; (R)-lactate from methylglyoxal: step 2/2. Its function is as follows. Thiolesterase that catalyzes the hydrolysis of S-D-lactoyl-glutathione to form glutathione and D-lactic acid. The sequence is that of Hydroxyacylglutathione hydrolase from Rhodopseudomonas palustris (strain ATCC BAA-98 / CGA009).